We begin with the raw amino-acid sequence, 223 residues long: MKVKIEESWKEVLNNEFNKEYFKKLVKFIKHEYKTKNGKIFPPPKLIFNAFNSLPFKDIKVVIIGQDPYHGKNQANGLAFSVDSKIKIPPSLQNIFKEIEKSLKIKTIPNGDLKRWAIQGVFLINTILTVEEGKPSSHKAIGWEIFTDEVIKIISKNLKNIVFMLWGNLARSKKGLIDPTKHLILETSHPSPYSANNGFLGSNHFSSALDYLKKHNKNIINFQ.

The active-site Proton acceptor is Asp67.

This sequence belongs to the uracil-DNA glycosylase (UDG) superfamily. UNG family.

It localises to the cytoplasm. The catalysed reaction is Hydrolyzes single-stranded DNA or mismatched double-stranded DNA and polynucleotides, releasing free uracil.. Functionally, excises uracil residues from the DNA which can arise as a result of misincorporation of dUMP residues by DNA polymerase or due to deamination of cytosine. The chain is Uracil-DNA glycosylase from Borreliella burgdorferi (strain ZS7) (Borrelia burgdorferi).